Here is a 343-residue protein sequence, read N- to C-terminus: Chlorophyll(ide) b reductase NOL, chloroplastic (343 aa).

The transit peptide at 1-54 (MAATAAYLPLRAQAQVGLAPLRPSGSAAAGARLPGRTARRRLAARGGPEAAGIR) directs the protein to the chloroplast. 78-102 (ITGSTKGIGYALAKEFLKAGDNVVI) serves as a coordination point for NAD(+). Residue Tyr228 is the Proton acceptor of the active site.

It belongs to the short-chain dehydrogenases/reductases (SDR) family. Interacts with NCY1 to form a complex that acts as a chlorophyll b reductase. As to expression, expressed in leaves and stems. Also detected in non-photosynthetic tissues such as roots.

Its subcellular location is the plastid. It is found in the chloroplast thylakoid membrane. The enzyme catalyses 7(1)-hydroxychlorophyllide a + NAD(+) = chlorophyllide b + NADH + H(+). It catalyses the reaction 7(1)-hydroxychlorophyllide a + NADP(+) = chlorophyllide b + NADPH + H(+). Functionally, required for chlorophyll b degradation. The chain is Chlorophyll(ide) b reductase NOL, chloroplastic (NOL) from Oryza sativa subsp. japonica (Rice).